The following is a 77-amino-acid chain: Large ribosomal subunit protein uL29 (77 aa).

Belongs to the universal ribosomal protein uL29 family.

This chain is Large ribosomal subunit protein uL29, found in Mycolicibacterium vanbaalenii (strain DSM 7251 / JCM 13017 / BCRC 16820 / KCTC 9966 / NRRL B-24157 / PYR-1) (Mycobacterium vanbaalenii).